The primary structure comprises 463 residues: Argininosuccinate lyase (463 aa).

Belongs to the lyase 1 family. Argininosuccinate lyase subfamily.

Its subcellular location is the cytoplasm. It catalyses the reaction 2-(N(omega)-L-arginino)succinate = fumarate + L-arginine. It participates in amino-acid biosynthesis; L-arginine biosynthesis; L-arginine from L-ornithine and carbamoyl phosphate: step 3/3. The protein is Argininosuccinate lyase of Prochlorococcus marinus (strain NATL2A).